The following is a 456-amino-acid chain: Nuclear distribution protein PAC1 (456 aa).

In terms of domain architecture, LisH spans 9–41 (QADELHKSIIAYLSANDLPNTAAALRAELNLTE). Residues 61–88 (TSIVRLQKKIMDLEARNAALQSELDNLT) adopt a coiled-coil conformation. WD repeat units lie at residues 114–153 (SHRD…LEMT), 156–197 (GHTR…KNVR), 201–240 (GHDH…CVRS), 243–282 (GHTG…NPEN), 288–348 (GHEH…LMTL), 350–389 (GHDN…KCVK), 394–437 (AHDR…PDVQ), and 439–456 (RCVI…IFAA).

It belongs to the WD repeat LIS1/nudF family. Self-associates. Interacts with NDL1 and dynein.

Its subcellular location is the cytoplasm. The protein resides in the cytoskeleton. It localises to the spindle pole. In terms of biological role, positively regulates the activity of the minus-end directed microtubule motor protein dynein. May enhance dynein-mediated microtubule sliding by targeting dynein to the microtubule plus end. Required for nuclear migration during vegetative growth as well as development. Required for retrograde early endosome (EE) transport from the hyphal tip. Required for localization of dynein to the mitotic spindle poles. Recruits additional proteins to the dynein complex at SPBs. The protein is Nuclear distribution protein PAC1 of Ajellomyces capsulatus (strain H143) (Darling's disease fungus).